A 103-amino-acid chain; its full sequence is Large ribosomal subunit protein mL41 (103 aa).

It belongs to the mitochondrion-specific ribosomal protein mL41 family. As to quaternary structure, component of the mitochondrial large ribosomal subunit (mt-LSU). Mature N.crassa 74S mitochondrial ribosomes consist of a small (37S) and a large (54S) subunit. The 37S small subunit contains a 16S ribosomal RNA (16S mt-rRNA) and 32 different proteins. The 54S large subunit contains a 23S rRNA (23S mt-rRNA) and 42 different proteins.

The protein resides in the mitochondrion. Its function is as follows. Component of the mitochondrial ribosome (mitoribosome), a dedicated translation machinery responsible for the synthesis of mitochondrial genome-encoded proteins, including at least some of the essential transmembrane subunits of the mitochondrial respiratory chain. The mitoribosomes are attached to the mitochondrial inner membrane and translation products are cotranslationally integrated into the membrane. This is Large ribosomal subunit protein mL41 (mrpl27) from Neurospora crassa (strain ATCC 24698 / 74-OR23-1A / CBS 708.71 / DSM 1257 / FGSC 987).